The chain runs to 613 residues: Probable potassium transport system protein Kup 1 (613 aa).

The next 12 helical transmembrane spans lie at 40–60, 93–113, 127–147, 158–178, 201–221, 237–257, 266–286, 288–308, 327–347, 356–376, 384–404, and 409–429; these read VLSM…VVFV, MLLG…TPAI, PALQ…LFLL, LFGP…LFSV, AVQA…AEAL, WFYI…ALLL, PFFL…ATAA, VIAS…AVHL, IYVP…VLAF, AYGI…TVVM, LPAV…FFGA, and VAAG…LMVT.

Belongs to the HAK/KUP transporter (TC 2.A.72) family.

The protein resides in the cell inner membrane. It catalyses the reaction K(+)(in) + H(+)(in) = K(+)(out) + H(+)(out). Functionally, transport of potassium into the cell. Likely operates as a K(+):H(+) symporter. The sequence is that of Probable potassium transport system protein Kup 1 from Ralstonia nicotianae (strain ATCC BAA-1114 / GMI1000) (Ralstonia solanacearum).